A 64-amino-acid chain; its full sequence is uncharacterized protein (64 aa).

A compositionally biased stretch (polar residues) spans 1-14 (MFNFDPTDQPTDQH). The tract at residues 1-42 (MFNFDPTDQPTDQHLLQLPTDPHPLQQPIDPHPPPQPNNNLP) is disordered.

This is an uncharacterized protein from Dictyostelium discoideum (Social amoeba).